Consider the following 130-residue polypeptide: Small ribosomal subunit protein uS9 (130 aa).

Belongs to the universal ribosomal protein uS9 family.

The polypeptide is Small ribosomal subunit protein uS9 (rpsI) (Haemophilus influenzae (strain ATCC 51907 / DSM 11121 / KW20 / Rd)).